Consider the following 303-residue polypeptide: Probable 5-dehydro-4-deoxyglucarate dehydratase (303 aa).

The protein belongs to the DapA family.

It catalyses the reaction 5-dehydro-4-deoxy-D-glucarate + H(+) = 2,5-dioxopentanoate + CO2 + H2O. It functions in the pathway carbohydrate acid metabolism; D-glucarate degradation; 2,5-dioxopentanoate from D-glucarate: step 2/2. This chain is Probable 5-dehydro-4-deoxyglucarate dehydratase, found in Leptothrix cholodnii (strain ATCC 51168 / LMG 8142 / SP-6) (Leptothrix discophora (strain SP-6)).